A 267-amino-acid polypeptide reads, in one-letter code: tRNA-cytidine(32) 2-sulfurtransferase 2 (267 aa).

Residues S42–S47 carry the PP-loop motif motif. [4Fe-4S] cluster is bound by residues C117, C120, and C208.

This sequence belongs to the TtcA family. As to quaternary structure, homodimer. It depends on Mg(2+) as a cofactor. [4Fe-4S] cluster is required as a cofactor.

It localises to the cytoplasm. The catalysed reaction is cytidine(32) in tRNA + S-sulfanyl-L-cysteinyl-[cysteine desulfurase] + AH2 + ATP = 2-thiocytidine(32) in tRNA + L-cysteinyl-[cysteine desulfurase] + A + AMP + diphosphate + H(+). It functions in the pathway tRNA modification. Catalyzes the ATP-dependent 2-thiolation of cytidine in position 32 of tRNA, to form 2-thiocytidine (s(2)C32). The sulfur atoms are provided by the cysteine/cysteine desulfurase (IscS) system. This chain is tRNA-cytidine(32) 2-sulfurtransferase 2, found in Francisella tularensis subsp. holarctica (strain FTNF002-00 / FTA).